Reading from the N-terminus, the 353-residue chain is Ribosome biogenesis protein BRX1 homolog (353 aa).

The interval 1–50 (MAATKRKRRGGLEVQAKKPKRSSKDAGQPAKQADVAKEAEEENRDRIPGP) is disordered. Positions 34-47 (DVAKEAEEENRDRI) are enriched in basic and acidic residues. The 190-residue stretch at 60–249 (ERILIFSSRG…LIKIFQGSFG (190 aa)) folds into the Brix domain. Lys160 is covalently cross-linked (Glycyl lysine isopeptide (Lys-Gly) (interchain with G-Cter in SUMO2)). Ser261 bears the Phosphoserine mark. Lys276 carries the post-translational modification N6-acetyllysine. Glycyl lysine isopeptide (Lys-Gly) (interchain with G-Cter in SUMO2) cross-links involve residues Lys314 and Lys322. The span at 334 to 344 (RRIYKRHRKLQ) shows a compositional bias: basic residues. Residues 334 to 353 (RRIYKRHRKLQQKMSRGSAK) are disordered.

This sequence belongs to the BRX1 family.

The protein resides in the nucleus. It localises to the nucleolus. Functionally, required for biogenesis of the 60S ribosomal subunit. This Mus musculus (Mouse) protein is Ribosome biogenesis protein BRX1 homolog (Brix1).